The sequence spans 275 residues: LIM/homeobox protein Awh (275 aa).

2 LIM zinc-binding domains span residues 6–67 (RSCA…NFGA) and 68–129 (KCSK…TVEG). Thr-126 carries the post-translational modification Phosphothreonine. The homeobox DNA-binding region spans 148-207 (TKRVRTTFTEEQLQVLQANFQIDSNPDGQDLERIASVTGLSKRVTQVWFQNSRARQKKHI). Residues 253–275 (PTHESSMDELSQDSSVHCMPSEV) are disordered.

First detected in neuroblasts in stage 9 embryos. Expressed in all 10 abdominal segments and in the labial segment during early embryogenesis. Expressed in the stage 14 developing epithelium. By embryonic stage 16, expression is refined to the abdominal histoblasts and salivary gland imaginal ring cells. Expressed in both larval and imaginal cells between the salivary gland and the salivary gland imaginal ring, in late third instar larvae. Also expressed in specific areas of the larval wing, leg and eye-antennal disks.

The protein resides in the nucleus. Probable transcription factor. Required for the establishment of a subset of imaginal tissues: the abdominal histoblasts and the salivary gland imaginal rings. The polypeptide is LIM/homeobox protein Awh (Drosophila melanogaster (Fruit fly)).